The chain runs to 421 residues: Testin (421 aa).

Residues 92–199 (MILTNPVAAK…GDVKLPCEMD (108 aa)) form the PET domain. The disordered stretch occupies residues 133 to 164 (EKQPVAGSEGAQYRKKQLAKQLPAHDQDPSKC). Residues 155–164 (PAHDQDPSKC) are compositionally biased toward basic and acidic residues. LIM zinc-binding domains are found at residues 234-297 (YSCY…CDSE), 299-359 (PRCA…NHAV), and 362-421 (QGCH…KMMS).

Belongs to the prickle / espinas / testin family. As to quaternary structure, interacts via LIM domain 1 with ZYX. Interacts (via LIM domain 3) with ENAH and VASP. Interacts with ALKBH4, talin, actin, alpha-actinin, GRIP1 and PXN. Interacts (via LIM domain 2) with ACTL7A (via N-terminus). Heterodimer with ACTL7A; the heterodimer interacts with ENAH to form a heterotrimer.

It is found in the cytoplasm. It localises to the cell junction. Its subcellular location is the focal adhesion. Its function is as follows. Scaffold protein that may play a role in cell adhesion, cell spreading and in the reorganization of the actin cytoskeleton. Plays a role in the regulation of cell proliferation. May act as a tumor suppressor. In Papio anubis (Olive baboon), this protein is Testin (TES).